The sequence spans 586 residues: uncharacterized protein (586 aa).

2 coiled-coil regions span residues 183 to 293 and 331 to 400; these read THTE…ELEN and FKDK…DKKN.

This is an uncharacterized protein from Bacillus subtilis (strain 168).